The chain runs to 329 residues: Protein RecA (329 aa).

63-70 contributes to the ATP binding site; that stretch reads GNESSGKT.

It belongs to the RecA family.

The protein resides in the cytoplasm. Can catalyze the hydrolysis of ATP in the presence of single-stranded DNA, the ATP-dependent uptake of single-stranded DNA by duplex DNA, and the ATP-dependent hybridization of homologous single-stranded DNAs. It interacts with LexA causing its activation and leading to its autocatalytic cleavage. This is Protein RecA from Malacoplasma penetrans (strain HF-2) (Mycoplasma penetrans).